An 812-amino-acid chain; its full sequence is Protein let-653 (812 aa).

Positions 1 to 21 (MRHPLISLLLLIAFYSTSSEA) are cleaved as a signal peptide. 2 consecutive Apple domains span residues 26–116 (CNSF…WKYC) and 123–209 (CSGE…ENNC). 6 disulfide bridges follow: Cys26-Cys116, Cys53-Cys88, Cys57-Cys72, Cys123-Cys209, Cys154-Cys178, and Cys158-Cys166. 3 N-linked (GlcNAc...) asparagine glycosylation sites follow: Asn172, Asn211, and Asn272. In terms of domain architecture, ZP spans 221–725 (ECRDNGISVS…NTCDDVEGCD (505 aa)). Low complexity-rich tracts occupy residues 375-449 (QVTT…STTT) and 496-584 (PTTT…PASS). 2 disordered regions span residues 375-461 (QVTT…STIM) and 494-584 (DVPT…PASS). Asn771 is a glycosylation site (N-linked (GlcNAc...) asparagine).

In terms of processing, cleaved at the C-terminal domain. Expressed in external cuticle-producing epithelial cells including the epidermis, vulva, rectum, excretory duct and excretory pore.

The protein resides in the apical cell membrane. The protein localises to the secreted. It localises to the extracellular space. Functionally, required for epithelial tube development and shaping. Involved in the morphogenesis and function of the three unicellular tubes of the excretory system, the canal cell, the duct cell and the pore cell. Also plays a role in cuticle development, alae formation and shaping of the vulval lumen. Required for larval development. The protein is Protein let-653 of Caenorhabditis elegans.